A 104-amino-acid chain; its full sequence is Large ribosomal subunit protein uL24 (104 aa).

The protein belongs to the universal ribosomal protein uL24 family. As to quaternary structure, part of the 50S ribosomal subunit.

In terms of biological role, one of two assembly initiator proteins, it binds directly to the 5'-end of the 23S rRNA, where it nucleates assembly of the 50S subunit. Its function is as follows. One of the proteins that surrounds the polypeptide exit tunnel on the outside of the subunit. In Methylorubrum extorquens (strain PA1) (Methylobacterium extorquens), this protein is Large ribosomal subunit protein uL24.